Here is a 459-residue protein sequence, read N- to C-terminus: ATP-dependent RNA helicase me31b (459 aa).

The interval 1 to 267 (MMTEKLNSGH…EINLMEELTL (267 aa)) is recA-like domain 1. A phosphoserine mark is found at Ser8 and Ser29. The Q motif motif lies at 58–86 (NEFEEFCLKRELLMGIFEKGWERPSPIQE). Positions 89–259 (IPIALSGKDV…EKHLREPYEI (171 aa)) constitute a Helicase ATP-binding domain. 102–109 (AKNGTGKT) contributes to the ATP binding site. The DEAD box motif lies at 207 to 210 (DEAD). Residues 264–431 (ELTLKGVTQY…PKVIDPALYV (168 aa)) form a gyf binding region. One can recognise a Helicase C-terminal domain in the interval 269-429 (GVTQYYAFVQ…PIPKVIDPAL (161 aa)). Residues 432-459 (ANVGASVGDTCNNSDLNNSANEEGNVSK) are recA-like domain 2. Ser450 is modified (phosphoserine).

It belongs to the DEAD box helicase family. DDX6/DHH1 subfamily. Conserved component of different types of multiprotein ribonucleoprotein complexes (RNPs) that form distinct germ granules (P-body, nuage, sponge body or polar granules) and P-body-like neuronal RNPs. Consequently it interacts with a wide variety of proteins, some of which appear to be common interactive partners in almost all RNPs types i.e. cup and tral, whereas other interactions are specific to a germ granule/RNP. Core functional components in me31B-containing RNPs include RNA regulatory proteins (such as translational repressor, RNA-decapping and exonuclease proteins), RNA localization proteins and additional proteins depending on the biological context of the RNPs. In the P-body RNPs, interacts with at least the translation repressor proteins tral, cup and Edc3, and the mRNA localization factor yps. Interaction with tral or Edc3 is required for translation repression and possibly RNA decapping; binding to tral and Edc3 is mutually exclusive. In the nuage and germ plasm polar granule RNPs, interacts with at least tral, cup, and additional proteins required for assembly and function of the germ granules such as tud, vas and aub. Interacts (when dimethylated on Arg residues) with tud; interaction is RNA-independent. Component of the osk RNP complex, which is composed of at least me31B, exu, yps, aret/bruno, cup, and the mRNA of osk. Component of the nanos RNP complex, which is composed of at least smg, cup, tral, me31B, the CCR4-NOT complex members Rga/NOT2 and Caf1-55, and the mRNA of nanos (nos). Interacts with tral and piRNA pathway components papi and AGO3; promotes interaction between nuage RNPs and the piRNA-mediated transposon silencing. Forms a RNP containing at least me31B, eIF4E1, cup, tral and pAbp; this interaction is required for the translational silencing of maternal mRNAs during the maternal-to-zygotic transition. In the sponge body, forms a RNP containing at least me31B, exu, yps and the mRNA of osk; interactions with exu and yps are RNA dependent. Component of a neuronal RNP, at least composed of me31B, tral and Fmr1. Component of the Atx2-Not1 repressor complex, composed of at least me31B, Atx2, tyf and pAbp. Interacts (via the C-terminus) with Atx2, tyf, pAbp and Lsm12a. Interacts (via RecA-like domain 2) with 4EHP-GYF2 complex member Gyf (via the me31B binding motif). Interacts with 4E-T, Edc3 and Patr-1. Symmetrically dimethylated on arginine residues. As to expression, ubiquitously expressed throughout the brain (at protein level). Expressed in the olfactory system including the antennal lobes, projection neurons, local interneurons, mushroom-body Kenyon cells and glial cells (at protein level).

Its subcellular location is the cytoplasm. It is found in the cytoplasmic ribonucleoprotein granule. The protein resides in the P-body. It localises to the endoplasmic reticulum. The protein localises to the cell projection. Its subcellular location is the dendrite. It carries out the reaction ATP + H2O = ADP + phosphate + H(+). Functionally, ATP-dependent RNA helicase which is a core component of a variety of ribonucleoprotein complexes (RNPs) that play critical roles in translational repression and mRNA decapping during embryogenesis, oogenesis, neurogenesis and neurotransmission. Recruits core components and translational repressors to some RNP complexes, and mediates RNP aggregation into processing granules such as P-bodies. As part of a RNP complex containing tral, eIF4E1, cup, and pAbp, involved in RNP-mediated translational repression of maternal mRNAs during oogenesis and embryogenesis. As part of a RNP complex containing tral and the RNA localization factors exu and yps, mediates translational silencing of mRNAs such as osk/oskar and bcd/bicoid during their transport to the oocyte in order to prevent their translation until they reach their positional destinations. In neurons and possibly imaginal disks, involved in miRNA-mediated translational repression, possibly in association with components of the piRNA transposon silencing pathway. Involved in RNA localization and protein trafficking in the oocyte. As part of an ER-associated RNP containing tral, cup and yps, required for tral-dependent ER exit site formation and consequently efficient trafficking of proteins such as grk and yl through the secretory pathway. Component of neuron RNPs that mediate transport and translation of neuronal RNAs, including translation repression of synaptic transcripts in preparation for their dendritic targeting. As part of the Atx2-Not1 repressor complex promotes Not1-dependent post-transcriptional gene silencing in adult circadian pacemaker neurons in order to sustain high-amplitude circadian rhythms and Pdf cycling in a per-independent manner. Promotes the interaction between Atx2 and Not1 within the Atx2-Not1 RNP complex. Recruited to the 4EHP-GYF2 complex by Gyf, where it plays a role in 4EHP-GYF2 mediated translational repression and mRNA decay. This is ATP-dependent RNA helicase me31b (me31B) from Drosophila melanogaster (Fruit fly).